The following is a 146-amino-acid chain: 16.0 kDa heat shock protein, peroxisomal (146 aa).

The sHSP domain maps to 23 to 143 (WASASATAAM…RPRTRPIAVS (121 aa)). A Microbody targeting signal motif is present at residues 144-146 (SKL).

This sequence belongs to the small heat shock protein (HSP20) family. May form oligomeric structures.

The protein resides in the peroxisome. The chain is 16.0 kDa heat shock protein, peroxisomal (HSP16.0) from Oryza sativa subsp. japonica (Rice).